A 214-amino-acid chain; its full sequence is Metalloproteinase inhibitor 3 (214 aa).

A signal peptide spans 1–26; that stretch reads MSVCALTLILGCFLLFLGDISKPAEG. Cys-27 provides a ligand contact to Zn(2+). Involved in metalloproteinase-binding stretches follow at residues 27 to 30 and 91 to 92; these read CTCA and ES. 6 cysteine pairs are disulfide-bonded: Cys-27–Cys-94, Cys-29–Cys-121, Cys-39–Cys-146, Cys-148–Cys-195, Cys-153–Cys-158, and Cys-166–Cys-187. Residues 27–146 enclose the NTR domain; the sequence is CTCAPSHPQD…GLNHRYPLGC (120 aa).

Belongs to the protease inhibitor I35 (TIMP) family.

The protein resides in the secreted. Its subcellular location is the extracellular space. It localises to the extracellular matrix. Complexes with metalloproteinases (such as collagenases) and irreversibly inactivates them by binding to their catalytic zinc cofactor. May form part of a tissue-specific acute response to remodeling stimuli. This chain is Metalloproteinase inhibitor 3 (timp3), found in Xenopus laevis (African clawed frog).